Here is a 55-residue protein sequence, read N- to C-terminus: Large ribosomal subunit protein bL32 (55 aa).

Belongs to the bacterial ribosomal protein bL32 family.

The protein is Large ribosomal subunit protein bL32 of Aeromonas hydrophila subsp. hydrophila (strain ATCC 7966 / DSM 30187 / BCRC 13018 / CCUG 14551 / JCM 1027 / KCTC 2358 / NCIMB 9240 / NCTC 8049).